A 450-amino-acid chain; its full sequence is uncharacterized protein (450 aa).

The region spanning 1 to 58 (MAKGEIVTVKIEEMDFKGYGVGYCEGKPLKVRGGILGQRVAVRVKKGKKGRAEGEIVE) is the TRAM domain. [4Fe-4S] cluster-binding residues include C71, C77, C80, and C159. S-adenosyl-L-methionine-binding residues include Q285, Y314, E335, and D380. C407 serves as the catalytic Nucleophile.

Belongs to the class I-like SAM-binding methyltransferase superfamily. RNA M5U methyltransferase family.

This is an uncharacterized protein from Caldanaerobacter subterraneus subsp. tengcongensis (strain DSM 15242 / JCM 11007 / NBRC 100824 / MB4) (Thermoanaerobacter tengcongensis).